Consider the following 1237-residue polypeptide: Cilia- and flagella-associated protein 61 (1237 aa).

Positions 278–301 (QDLSVRRSQDAELRSSSQGSQKIV) are disordered. A compositionally biased stretch (basic and acidic residues) spans 281-290 (SVRRSQDAEL).

In terms of assembly, component of axonemal radial spokes, the protein complexes that link the outer microtubule doublets with the central pair of microtubules. Interacts with CFAP91/MAATS1, ODAD2/ARMC4, RSPH3A, ROPN1, ROPN1L and RSPH9. Interacts with DYNLT1, DYNC1I2 and TUBB3. Interacts with WDR35, IFT22 and IFT81.

It localises to the cytoplasm. Its subcellular location is the cytoskeleton. The protein resides in the flagellum axoneme. Functionally, involved in sperm flagellum assembly. Plays an essential role in the formation of the radial spokes in flagellum axoneme. The chain is Cilia- and flagella-associated protein 61 from Homo sapiens (Human).